Here is a 326-residue protein sequence, read N- to C-terminus: Homoserine kinase (326 aa).

The protein belongs to the pseudomonas-type ThrB family.

It carries out the reaction L-homoserine + ATP = O-phospho-L-homoserine + ADP + H(+). It functions in the pathway amino-acid biosynthesis; L-threonine biosynthesis; L-threonine from L-aspartate: step 4/5. The chain is Homoserine kinase from Sinorhizobium medicae (strain WSM419) (Ensifer medicae).